A 548-amino-acid polypeptide reads, in one-letter code: 1,3-beta-glucanosyltransferase gel4 (548 aa).

The signal sequence occupies residues 1 to 25; sequence MKFVYAAAGASLVGSALATLPVIEA. N-linked (GlcNAc...) asparagine glycans are attached at residues N51 and N69. C88 and C117 are joined by a disulfide. (1,3-beta-D-glucosyl)n contacts are provided by residues Y106, 133–141, N174, and E175; that span reads SAPSESINR. E175 (proton donor) is an active-site residue. N181 carries N-linked (GlcNAc...) asparagine glycosylation. Positions 217 and 222 each coordinate (1,3-beta-D-glucosyl)n. Disulfide bonds link C231-C364, C249-C280, C386-C437, C395-C461, and C414-C419. E277 (nucleophile) is an active-site residue. Y309 contacts (1,3-beta-D-glucosyl)n. Residue N425 is glycosylated (N-linked (GlcNAc...) asparagine). A lipid anchor (GPI-like-anchor amidated alanine) is attached at A519. A propeptide spans 520–548 (removed in mature form); the sequence is SPMAVKVGNWQFGAYIATALFAGVGMLVL.

Belongs to the glycosyl hydrolase 72 family. The GPI-like anchor contains a phosphoceramide lipid group.

The protein resides in the cell membrane. In terms of biological role, splits internally a 1,3-beta-glucan molecule and transfers the newly generated reducing end (the donor) to the non-reducing end of another 1,3-beta-glucan molecule (the acceptor) forming a 1,3-beta linkage, resulting in the elongation of 1,3-beta-glucan chains in the cell wall. Involved in cell wall morphogenesis. In Aspergillus fumigatus (strain ATCC MYA-4609 / CBS 101355 / FGSC A1100 / Af293) (Neosartorya fumigata), this protein is 1,3-beta-glucanosyltransferase gel4 (gel4).